Reading from the N-terminus, the 855-residue chain is Lon protease (855 aa).

The 244-residue stretch at 45-288 folds into the Lon N-terminal domain; that stretch reads IYLLTVKNVV…ETFRFLNIEY (244 aa). 439-446 contacts ATP; that stretch reads GPPGVGKT. The 182-residue stretch at 674 to 855 folds into the Lon proteolytic domain; it reads IQVPGVVTGL…NEVIDLSIIK (182 aa). Residues Ser761 and Lys804 contribute to the active site.

This sequence belongs to the peptidase S16 family. As to quaternary structure, homohexamer. Organized in a ring with a central cavity.

It is found in the cytoplasm. The catalysed reaction is Hydrolysis of proteins in presence of ATP.. ATP-dependent serine protease that mediates the selective degradation of mutant and abnormal proteins as well as certain short-lived regulatory proteins. Required for cellular homeostasis and for survival from DNA damage and developmental changes induced by stress. Degrades polypeptides processively to yield small peptide fragments that are 5 to 10 amino acids long. Binds to DNA in a double-stranded, site-specific manner. The protein is Lon protease of Karelsulcia muelleri (strain GWSS) (Sulcia muelleri).